A 493-amino-acid polypeptide reads, in one-letter code: MRPLCMTYWWLGLLATVGAATGPEADVEGTEDGSQREYIYLNRYKRAGESPDKCTYTFIVPQQRVTGAICVNSKEPEVHLENRVHKQELELLNNELLKQKRQIETLQQLVEVDGGIVSEVKLLRKESRNMNSRVTQLYMQLLHEIIRKRDNALELSQLENRILNQTADMLQLASKYKDLEHKFQHLAMLAHNQSEVIAQLEEHCQRVPAARPMPQPPPAAPPRVYQPPTYNRIINQISTNEIQSDQNLKVLPPSLPTMPALTSLPSSTDKPSGPWRDCLQALEDGHSTSSIYLVKPENTNRLMQVWCDQRHDPGGWTVIQRRLDGSVNFFRNWETYKQGFGNIDGEYWLGLENIYWLTNQGNYKLLVTMEDWSGRKVFAEYASFRLEPESEYYKLRLGRYHGNAGDSFTWHNGKQFTTLDRDHDVYTGNCAHYQKGGWWYNACAHSNLNGVWYRGGHYRSRYQDGVYWAEFRGGSYSLKKVVMMIRPNPNTFH.

Positions 1–19 (MRPLCMTYWWLGLLATVGA) are cleaved as a signal peptide. 2 coiled-coil regions span residues 77 to 115 (EVHLENRVHKQELELLNNELLKQKRQIETLQQLVEVDGG) and 152 to 202 (ALEL…QLEE). N-linked (GlcNAc...) asparagine glycosylation is found at Asn164 and Asn192. The 221-residue stretch at 269–489 (DKPSGPWRDC…KVVMMIRPNP (221 aa)) folds into the Fibrinogen C-terminal domain. 2 disulfide bridges follow: Cys278–Cys307 and Cys430–Cys443.

In terms of tissue distribution, widely expressed in heart, tongue, lung and skeletal muscle. Also found in lower levels in kidney, epididymis and testis.

It localises to the secreted. Functionally, induces sprouting in endothelial cells through an autocrine and paracrine action. The protein is Angiopoietin-related protein 2 (Angptl2) of Mus musculus (Mouse).